The primary structure comprises 196 residues: Molybdopterin synthase catalytic subunit (196 aa).

Residues 110–111 (HR), Lys126, and 133–135 (KKE) each bind substrate. The interval 142–196 (GGIWRANRDGAVGERVDEDEEKKKPDMGPHGPILRPSRPGERGHGPVVRNHQLGS) is disordered. The span at 147-168 (ANRDGAVGERVDEDEEKKKPDM) shows a compositional bias: basic and acidic residues.

It belongs to the MoaE family. MOCS2B subfamily. In terms of assembly, heterotetramer; composed of 2 small (MOCS2A) and 2 large (MOCS2B) subunits.

The protein resides in the cytoplasm. The enzyme catalyses 2 [molybdopterin-synthase sulfur-carrier protein]-C-terminal-Gly-aminoethanethioate + cyclic pyranopterin phosphate + H2O = molybdopterin + 2 [molybdopterin-synthase sulfur-carrier protein]-C-terminal Gly-Gly + 2 H(+). It functions in the pathway cofactor biosynthesis; molybdopterin biosynthesis. Functionally, catalytic subunit of the molybdopterin synthase complex, a complex that catalyzes the conversion of precursor Z into molybdopterin. Acts by mediating the incorporation of 2 sulfur atoms from thiocarboxylated MOCS2A into precursor Z to generate a dithiolene group. This chain is Molybdopterin synthase catalytic subunit, found in Sclerotinia sclerotiorum (strain ATCC 18683 / 1980 / Ss-1) (White mold).